The primary structure comprises 126 residues: UPF0538 protein C2orf76 homolog (126 aa).

This sequence belongs to the UPF0538 family.

The chain is UPF0538 protein C2orf76 homolog from Xenopus tropicalis (Western clawed frog).